The sequence spans 228 residues: MKKAVVLLSGGLDSTTCLALAKSQGFACYALSFSYGQRHSAELCAATRIAKHMDAADHKIVTLDTALFGGSALTDASIEVPEFKESPEIPVTYVPARNTIFLAMALGYAESIGARDIFIGASSVDYSHYPDCRPEFIESFQSLANLATKAGIEGDRFTINAPLQYLSKVQTIQLGTELGVDYGLTVSCYQANEAGEACGQCDSCTFRKRGFKSAGVNDPTRYQKCVHI.

ATP is bound at residue 8 to 18; sequence LSGGLDSTTCL. Zn(2+)-binding residues include cysteine 188, cysteine 198, cysteine 201, and cysteine 204.

Belongs to the QueC family. The cofactor is Zn(2+).

It catalyses the reaction 7-carboxy-7-deazaguanine + NH4(+) + ATP = 7-cyano-7-deazaguanine + ADP + phosphate + H2O + H(+). It participates in purine metabolism; 7-cyano-7-deazaguanine biosynthesis. Its function is as follows. Catalyzes the ATP-dependent conversion of 7-carboxy-7-deazaguanine (CDG) to 7-cyano-7-deazaguanine (preQ(0)). The chain is 7-cyano-7-deazaguanine synthase from Legionella pneumophila (strain Corby).